A 232-amino-acid chain; its full sequence is Chaperone protein CssC (232 aa).

The signal sequence occupies residues 1-20 (MKSKLIILLMLVPFSSFSTE).

It belongs to the periplasmic pilus chaperone family.

It localises to the periplasm. Functionally, involved in the biogenesis of the CS6 fimbria. The protein is Chaperone protein CssC (cssC) of Escherichia coli.